Consider the following 357-residue polypeptide: Peptide chain release factor 1 (357 aa).

Position 234 is an N5-methylglutamine (glutamine 234). The disordered stretch occupies residues 249–308 (PSGVEVSCQDEKSQHKNRSKAMRVLRSRVYEKKREEQQAEREEARRSMVGSGDRSAKIRT). Residues 263–274 (HKNRSKAMRVLR) show a composition bias toward basic residues. Positions 276 to 294 (RVYEKKREEQQAEREEARR) are enriched in basic and acidic residues.

It belongs to the prokaryotic/mitochondrial release factor family. In terms of processing, methylated by PrmC. Methylation increases the termination efficiency of RF1.

The protein localises to the cytoplasm. Functionally, peptide chain release factor 1 directs the termination of translation in response to the peptide chain termination codons UAG and UAA. In Salinibacter ruber (strain DSM 13855 / M31), this protein is Peptide chain release factor 1.